The chain runs to 298 residues: Centromere protein O (298 aa).

Residues 29–49 are disordered; that stretch reads NISNRKSEEPAVRKKESSLRT. Positions 33-49 are enriched in basic and acidic residues; the sequence is RKSEEPAVRKKESSLRT. Phosphoserine is present on serine 35. A coiled-coil region spans residues 39–74; that stretch reads AVRKKESSLRTKIRELRQQRDKLRAEVKQWGARVKE.

It belongs to the CENP-O/MCM21 family. In terms of assembly, component of the CENPA-CAD complex, composed of CENPI, CENPK, CENPL, CENPO, CENPP, CENPQ, CENPR and CENPS. The CENPA-CAD complex interacts with the CENPA-NAC complex, at least composed of CENPA, CENPC, CENPH, CENPM, CENPN, CENPT and CENPU.

The protein resides in the nucleus. It localises to the chromosome. The protein localises to the centromere. Its subcellular location is the kinetochore. Functionally, component of the CENPA-CAD (nucleosome distal) complex, a complex recruited to centromeres which is involved in assembly of kinetochore proteins, mitotic progression and chromosome segregation. May be involved in incorporation of newly synthesized CENPA into centromeres via its interaction with the CENPA-NAC complex. Modulates the kinetochore-bound levels of NDC80 complex. In Mus musculus (Mouse), this protein is Centromere protein O (Cenpo).